Reading from the N-terminus, the 141-residue chain is Hemoglobin subunit alpha (141 aa).

The Globin domain maps to 1–141; that stretch reads VLSPADKTNV…VSTVLTSKYR (141 aa). Phosphoserine is present on serine 3. Lysine 7 is subject to N6-succinyllysine. Threonine 8 bears the Phosphothreonine mark. Lysine 11 carries the N6-succinyllysine modification. Lysine 16 carries the post-translational modification N6-acetyllysine; alternate. N6-succinyllysine; alternate is present on lysine 16. Phosphotyrosine is present on tyrosine 24. Serine 35 bears the Phosphoserine mark. Lysine 40 carries the N6-succinyllysine modification. Phosphoserine is present on serine 49. Histidine 58 lines the O2 pocket. Histidine 87 contributes to the heme b binding site. Serine 102 bears the Phosphoserine mark. Phosphothreonine is present on threonine 108. Serine 124 carries the phosphoserine modification. Residues threonine 134 and threonine 137 each carry the phosphothreonine modification. Serine 138 carries the post-translational modification Phosphoserine.

Belongs to the globin family. Heterotetramer of two alpha chains and two beta chains. In terms of tissue distribution, red blood cells.

Functionally, involved in oxygen transport from the lung to the various peripheral tissues. Hemopressin acts as an antagonist peptide of the cannabinoid receptor CNR1. Hemopressin-binding efficiently blocks cannabinoid receptor CNR1 and subsequent signaling. This is Hemoglobin subunit alpha (HBA) from Pteronura brasiliensis (Giant otter).